Consider the following 316-residue polypeptide: uncharacterized protein (316 aa).

The helical transmembrane segment at 12-34 (RWVCLTSVILFCFCIAVMRYGGV) threads the bilayer.

The protein resides in the membrane. This is an uncharacterized protein from Treponema pallidum (strain Nichols).